Reading from the N-terminus, the 149-residue chain is Calmodulin-3 (149 aa).

Alanine 2 bears the N-acetylalanine mark. EF-hand domains lie at 8–43 (DQIA…LGQN), 44–79 (PTEA…KMKD), 81–116 (DSEE…LGEK), and 117–149 (LTDE…MMAK). Ca(2+)-binding residues include aspartate 21, aspartate 23, aspartate 25, cysteine 27, glutamate 32, aspartate 57, aspartate 59, asparagine 61, threonine 63, glutamate 68, aspartate 94, aspartate 96, asparagine 98, and glutamate 105. Lysine 116 is subject to N6,N6,N6-trimethyllysine. The Ca(2+) site is built by aspartate 130, aspartate 132, aspartate 134, glutamine 136, and glutamate 141.

Belongs to the calmodulin family.

Calmodulin mediates the control of a large number of enzymes, ion channels and other proteins by Ca(2+). Among the enzymes to be stimulated by the calmodulin-Ca(2+) complex are a number of protein kinases and phosphatases. This is Calmodulin-3 (CAM3) from Oryza sativa subsp. indica (Rice).